The following is a 435-amino-acid chain: UPF0597 protein ASA_0240 (435 aa).

It belongs to the UPF0597 family.

The polypeptide is UPF0597 protein ASA_0240 (Aeromonas salmonicida (strain A449)).